Reading from the N-terminus, the 226-residue chain is tRNA (guanine-N(7)-)-methyltransferase (226 aa).

The segment at 1–22 is disordered; that stretch reads MTTPQQPHGPLRSFGRLKSRPV. S-adenosyl-L-methionine is bound by residues Glu-59, Glu-84, Asp-111, and Asp-133. Asp-133 is a catalytic residue. Position 137 (Lys-137) interacts with substrate. The tract at residues 139-144 is interaction with RNA; sequence RHNKRR. Residues Asp-169 and 206-209 contribute to the substrate site; that span reads TRYE.

This sequence belongs to the class I-like SAM-binding methyltransferase superfamily. TrmB family.

It catalyses the reaction guanosine(46) in tRNA + S-adenosyl-L-methionine = N(7)-methylguanosine(46) in tRNA + S-adenosyl-L-homocysteine. The protein operates within tRNA modification; N(7)-methylguanine-tRNA biosynthesis. Functionally, catalyzes the formation of N(7)-methylguanine at position 46 (m7G46) in tRNA. This Caulobacter vibrioides (strain ATCC 19089 / CIP 103742 / CB 15) (Caulobacter crescentus) protein is tRNA (guanine-N(7)-)-methyltransferase.